Consider the following 320-residue polypeptide: o-succinylbenzoate synthase (320 aa).

Catalysis depends on lysine 133, which acts as the Proton donor. Aspartate 161, glutamate 190, and aspartate 213 together coordinate Mg(2+). Lysine 235 serves as the catalytic Proton acceptor.

This sequence belongs to the mandelate racemase/muconate lactonizing enzyme family. MenC type 1 subfamily. A divalent metal cation serves as cofactor.

The enzyme catalyses (1R,6R)-6-hydroxy-2-succinyl-cyclohexa-2,4-diene-1-carboxylate = 2-succinylbenzoate + H2O. It participates in quinol/quinone metabolism; 1,4-dihydroxy-2-naphthoate biosynthesis; 1,4-dihydroxy-2-naphthoate from chorismate: step 4/7. It functions in the pathway quinol/quinone metabolism; menaquinone biosynthesis. Functionally, converts 2-succinyl-6-hydroxy-2,4-cyclohexadiene-1-carboxylate (SHCHC) to 2-succinylbenzoate (OSB). The polypeptide is o-succinylbenzoate synthase (Escherichia coli O139:H28 (strain E24377A / ETEC)).